Reading from the N-terminus, the 462-residue chain is Chitinase 1 (462 aa).

Residues 1-17 form the signal peptide; sequence MILNLIILLAISIVASA. Residues 18 to 291 form the GH18 domain; it reads SNIAAYWGQN…NQLHQALSGS (274 aa). Asparagine 57 is a glycosylation site (N-linked (GlcNAc...) asparagine). Glutamate 147 acts as the Proton donor in catalysis.

It belongs to the glycosyl hydrolase 18 family. Chitinase class V subfamily.

It is found in the secreted. It catalyses the reaction Random endo-hydrolysis of N-acetyl-beta-D-glucosaminide (1-&gt;4)-beta-linkages in chitin and chitodextrins.. Its function is as follows. Chitinase involved in the remodeling of chitin in the fungal cell wall. Plays a role in cell separation. The protein is Chitinase 1 (CHT1) of Candida albicans (strain SC5314 / ATCC MYA-2876) (Yeast).